The sequence spans 365 residues: Eukaryotic translation initiation factor 3 subunit H (365 aa).

The region spanning 11–160 (VKVEALVVMK…LRAFRLSPKF (150 aa)) is the MPN domain.

Belongs to the eIF-3 subunit H family. Component of the eukaryotic translation initiation factor 3 (eIF-3) complex.

Its subcellular location is the cytoplasm. Component of the eukaryotic translation initiation factor 3 (eIF-3) complex, which is involved in protein synthesis of a specialized repertoire of mRNAs and, together with other initiation factors, stimulates binding of mRNA and methionyl-tRNAi to the 40S ribosome. The eIF-3 complex specifically targets and initiates translation of a subset of mRNAs involved in cell proliferation. This is Eukaryotic translation initiation factor 3 subunit H from Aspergillus fumigatus (strain CBS 144.89 / FGSC A1163 / CEA10) (Neosartorya fumigata).